We begin with the raw amino-acid sequence, 133 residues long: Ribonuclease VapC28 (133 aa).

In terms of domain architecture, PINc spans 1–124; the sequence is MIVDTSAIIA…LWKGNDFGHT (124 aa). Mg(2+) contacts are provided by Asp4 and Asp100.

Belongs to the PINc/VapC protein family. Mg(2+) serves as cofactor.

In terms of biological role, toxic component of a type II toxin-antitoxin (TA) system. An RNase. Upon expression in M.smegmatis inhibits colony formation. Its toxic effect is neutralized by coexpression with cognate antitoxin VapB28. The polypeptide is Ribonuclease VapC28 (Mycobacterium tuberculosis (strain ATCC 25618 / H37Rv)).